The following is a 116-amino-acid chain: Neuropeptide Y receptor type 1 (116 aa).

The helical transmembrane segment at 1-6 threads the bilayer; that stretch reads LVLIAV. At 7-24 the chain is on the cytoplasmic side; it reads ERHQLIINPRGWRPSNRH. A helical membrane pass occupies residues 25 to 45; sequence AYVGIAVIWVLAVASSLPFLI. Topologically, residues 46 to 81 are extracellular; sequence YQVLTDEPFQNVTLDAFKDKYVCFDKFPSDSHRLSY. N-linked (GlcNAc...) asparagine glycosylation occurs at N56. The helical transmembrane segment at 82-102 threads the bilayer; it reads TTLLLVLQYFGPLCFIFICYF. At 103–116 the chain is on the cytoplasmic side; it reads KIYIRLKRRNNMMD.

Belongs to the G-protein coupled receptor 1 family.

It localises to the cell membrane. In terms of biological role, receptor for neuropeptide Y and peptide YY. The polypeptide is Neuropeptide Y receptor type 1 (NPY1R) (Ovis aries (Sheep)).